Consider the following 299-residue polypeptide: MKLGIIGAGKWGSALHFALSKKNDVYITSRHYHDLKNFVSLEEILRLEYLILVLPAQVIGPWLEKHPLRKDHKVLLASKGIDIKKKKFLNEILQQFIPQEHLAVLSGPSFAAEVQKGLPTAVVVSSSNEILAKTYAQMFPDFMKAYVDDDVVGAEIAGAYKNVIAIASGICDGLKLGNNARAALLARGLVEMERFASHFGARMRTFLGLSGAGDLFLTASSTLSRNYRVGLGLALGKDLQRILNDLGEVAEGVYTVEAIIEIAKEHSIYVPIAREVYEIIHGKNPKLSIIHLLERNGDD.

NADPH-binding residues include Trp-11, Arg-30, His-31, and Lys-79. 3 residues coordinate sn-glycerol 3-phosphate: Lys-79, Gly-107, and Ser-109. Ala-111 serves as a coordination point for NADPH. The sn-glycerol 3-phosphate site is built by Lys-161, Asp-214, Ser-224, Arg-225, and Asn-226. Lys-161 acts as the Proton acceptor in catalysis. An NADPH-binding site is contributed by Arg-225. Residues Val-249 and Glu-251 each contribute to the NADPH site.

The protein belongs to the NAD-dependent glycerol-3-phosphate dehydrogenase family.

It localises to the cytoplasm. It catalyses the reaction sn-glycerol 3-phosphate + NAD(+) = dihydroxyacetone phosphate + NADH + H(+). The enzyme catalyses sn-glycerol 3-phosphate + NADP(+) = dihydroxyacetone phosphate + NADPH + H(+). The protein operates within membrane lipid metabolism; glycerophospholipid metabolism. Catalyzes the reduction of the glycolytic intermediate dihydroxyacetone phosphate (DHAP) to sn-glycerol 3-phosphate (G3P), the key precursor for phospholipid synthesis. This chain is Glycerol-3-phosphate dehydrogenase [NAD(P)+], found in Nitratiruptor sp. (strain SB155-2).